Here is a 245-residue protein sequence, read N- to C-terminus: Orotidine 5'-phosphate decarboxylase (245 aa).

Substrate contacts are provided by residues aspartate 22, lysine 44, 71 to 80, threonine 131, arginine 192, glutamine 201, glycine 221, and arginine 222; that span reads DLKFHDIPNT. Catalysis depends on lysine 73, which acts as the Proton donor.

It belongs to the OMP decarboxylase family. Type 1 subfamily. As to quaternary structure, homodimer.

The catalysed reaction is orotidine 5'-phosphate + H(+) = UMP + CO2. It participates in pyrimidine metabolism; UMP biosynthesis via de novo pathway; UMP from orotate: step 2/2. In terms of biological role, catalyzes the decarboxylation of orotidine 5'-monophosphate (OMP) to uridine 5'-monophosphate (UMP). The sequence is that of Orotidine 5'-phosphate decarboxylase from Salmonella newport (strain SL254).